A 117-amino-acid chain; its full sequence is UPF0295 protein GTNG_0491 (117 aa).

The next 2 helical transmembrane spans lie at 12-32 and 42-62; these read IRTF…LGLF and LFMV…FWIG.

The protein belongs to the UPF0295 family.

The protein resides in the cell membrane. The protein is UPF0295 protein GTNG_0491 of Geobacillus thermodenitrificans (strain NG80-2).